The chain runs to 209 residues: Ribulose-phosphate 3-epimerase (209 aa).

A substrate-binding site is contributed by S8. A divalent metal cation is bound by residues H33, D35, H64, and D170. D35 (proton acceptor) is an active-site residue. Substrate is bound by residues H64, 170 to 172, and 191 to 192; these read DGG and GS. D170 acts as the Proton donor in catalysis.

It belongs to the ribulose-phosphate 3-epimerase family. Requires a divalent metal cation as cofactor.

It carries out the reaction D-ribulose 5-phosphate = D-xylulose 5-phosphate. It participates in carbohydrate degradation. Catalyzes the reversible epimerization of D-ribulose 5-phosphate to D-xylulose 5-phosphate. This Mycoplasma genitalium (strain ATCC 33530 / DSM 19775 / NCTC 10195 / G37) (Mycoplasmoides genitalium) protein is Ribulose-phosphate 3-epimerase.